The primary structure comprises 419 residues: Serine hydroxymethyltransferase (419 aa).

Residues Leu-119 and 123-125 (GHL) each bind (6S)-5,6,7,8-tetrahydrofolate. Lys-228 carries the N6-(pyridoxal phosphate)lysine modification.

The protein belongs to the SHMT family. As to quaternary structure, homodimer. Pyridoxal 5'-phosphate serves as cofactor.

The protein localises to the cytoplasm. The enzyme catalyses (6R)-5,10-methylene-5,6,7,8-tetrahydrofolate + glycine + H2O = (6S)-5,6,7,8-tetrahydrofolate + L-serine. Its pathway is one-carbon metabolism; tetrahydrofolate interconversion. It participates in amino-acid biosynthesis; glycine biosynthesis; glycine from L-serine: step 1/1. Its function is as follows. Catalyzes the reversible interconversion of serine and glycine with tetrahydrofolate (THF) serving as the one-carbon carrier. This reaction serves as the major source of one-carbon groups required for the biosynthesis of purines, thymidylate, methionine, and other important biomolecules. Also exhibits THF-independent aldolase activity toward beta-hydroxyamino acids, producing glycine and aldehydes, via a retro-aldol mechanism. This chain is Serine hydroxymethyltransferase, found in Desulfosudis oleivorans (strain DSM 6200 / JCM 39069 / Hxd3) (Desulfococcus oleovorans).